The following is a 41-amino-acid chain: Replication-associated protein (41 aa).

In terms of biological role, involved in viral RNA replication. This Potato leafroll virus (strain Potato/Scotland/strain 1/1984) (PLrV) protein is Replication-associated protein.